The sequence spans 515 residues: Maturase K (515 aa).

The protein belongs to the intron maturase 2 family. MatK subfamily.

The protein localises to the plastid. It is found in the chloroplast. In terms of biological role, usually encoded in the trnK tRNA gene intron. Probably assists in splicing its own and other chloroplast group II introns. This is Maturase K from Pinus yunnanensis (Yunnan pine).